Consider the following 478-residue polypeptide: Membrane-bound lytic murein transglycosylase F (478 aa).

An N-terminal signal peptide occupies residues 1–29 (MFPDSSYLFSMRSLSRFLIAIFGCGALLA). Residues 30–269 (SCDSFERSVL…RLLDRYYGHI (240 aa)) form a non-LT domain region. An LT domain region spans residues 271 to 478 (RLHHTDVNGI…RKEDDSWQEF (208 aa)). Glu316 is a catalytic residue.

It in the N-terminal section; belongs to the bacterial solute-binding protein 3 family. In the C-terminal section; belongs to the transglycosylase Slt family.

Its subcellular location is the cell outer membrane. The catalysed reaction is Exolytic cleavage of the (1-&gt;4)-beta-glycosidic linkage between N-acetylmuramic acid (MurNAc) and N-acetylglucosamine (GlcNAc) residues in peptidoglycan, from either the reducing or the non-reducing ends of the peptidoglycan chains, with concomitant formation of a 1,6-anhydrobond in the MurNAc residue.. In terms of biological role, murein-degrading enzyme that degrades murein glycan strands and insoluble, high-molecular weight murein sacculi, with the concomitant formation of a 1,6-anhydromuramoyl product. Lytic transglycosylases (LTs) play an integral role in the metabolism of the peptidoglycan (PG) sacculus. Their lytic action creates space within the PG sacculus to allow for its expansion as well as for the insertion of various structures such as secretion systems and flagella. The polypeptide is Membrane-bound lytic murein transglycosylase F (Nitrosospira multiformis (strain ATCC 25196 / NCIMB 11849 / C 71)).